Consider the following 347-residue polypeptide: Cytosolic sulfotransferase 14 (347 aa).

87–92 (KSGTTW) contacts 3'-phosphoadenylyl sulfate. His155 functions as the Proton acceptor in the catalytic mechanism. Residues Arg177, Ser185, Tyr244, and 310–312 (RKG) contribute to the 3'-phosphoadenylyl sulfate site.

The protein belongs to the sulfotransferase 1 family.

It localises to the cytoplasm. Functionally, sulfotransferase that utilizes 3'-phospho-5'-adenylyl sulfate (PAPS) as sulfonate donor. Not active with 11-hydroxyjasmonate or 12-hydroxyjasmonate. The sequence is that of Cytosolic sulfotransferase 14 (SOT14) from Arabidopsis thaliana (Mouse-ear cress).